A 408-amino-acid chain; its full sequence is WD repeat-containing protein JIP5 (408 aa).

WD repeat units follow at residues 5–44 (PVGS…DSHN), 50–86 (PSKR…TTDI), 87–130 (DARS…SVKT), 133–172 (QHFD…PKVV), 177–216 (DQED…GDCV), and 221–267 (GHPL…FLGV). The segment at 311-408 (VDSDEEEDDE…VIDKDFFDGL (98 aa)) is disordered. 2 stretches are compositionally biased toward acidic residues: residues 313 to 339 (SDEE…EDEE) and 356 to 366 (DESDDEDEEME). Positions 396 to 408 (KETVIDKDFFDGL) are enriched in basic and acidic residues.

This sequence belongs to the WD repeat WDR55 family.

Its subcellular location is the nucleus. It localises to the nucleolus. This chain is WD repeat-containing protein JIP5 (JIP5), found in Coprinopsis cinerea (strain Okayama-7 / 130 / ATCC MYA-4618 / FGSC 9003) (Inky cap fungus).